An 88-amino-acid chain; its full sequence is Small ribosomal subunit protein uS17 (88 aa).

The protein belongs to the universal ribosomal protein uS17 family. In terms of assembly, part of the 30S ribosomal subunit.

Its function is as follows. One of the primary rRNA binding proteins, it binds specifically to the 5'-end of 16S ribosomal RNA. This is Small ribosomal subunit protein uS17 from Methylorubrum extorquens (strain PA1) (Methylobacterium extorquens).